The sequence spans 456 residues: Chromosomal replication initiator protein DnaA (456 aa).

The segment at 1–79 (MSQEIWADVL…QHPQVSFQVL (79 aa)) is domain I, interacts with DnaA modulators. Residues 79–112 (LPASQDALLLPSDPPPAPISPGRAPAPPPADNRK) are domain II. Positions 89–112 (PSDPPPAPISPGRAPAPPPADNRK) are disordered. Positions 90 to 108 (SDPPPAPISPGRAPAPPPA) are enriched in pro residues. Positions 113 to 329 (TLNPKYTFEN…GALMRVVAFS (217 aa)) are domain III, AAA+ region. Gly-157, Gly-159, Lys-160, and Thr-161 together coordinate ATP. A domain IV, binds dsDNA region spans residues 330-456 (SLNNVPFSRA…KGLEDEDSRA (127 aa)).

Belongs to the DnaA family. As to quaternary structure, oligomerizes as a right-handed, spiral filament on DNA at oriC.

The protein localises to the cytoplasm. Functionally, plays an essential role in the initiation and regulation of chromosomal replication. ATP-DnaA binds to the origin of replication (oriC) to initiate formation of the DNA replication initiation complex once per cell cycle. Binds the DnaA box (a 9 base pair repeat at the origin) and separates the double-stranded (ds)DNA. Forms a right-handed helical filament on oriC DNA; dsDNA binds to the exterior of the filament while single-stranded (ss)DNA is stabiized in the filament's interior. The ATP-DnaA-oriC complex binds and stabilizes one strand of the AT-rich DNA unwinding element (DUE), permitting loading of DNA polymerase. After initiation quickly degrades to an ADP-DnaA complex that is not apt for DNA replication. Binds acidic phospholipids. The protein is Chromosomal replication initiator protein DnaA of Deinococcus deserti (strain DSM 17065 / CIP 109153 / LMG 22923 / VCD115).